The primary structure comprises 492 residues: Falcipain-3 (492 aa).

The Cytoplasmic segment spans residues 1–35 (MEYHMEYSPNEVIKQEREVFVGKEKSGSKFKRKRS). Positions 1-242 (MEYHMEYSPN…LNLKTHGPFK (242 aa)) are cleaved as a propeptide — activation peptide. Positions 16–25 (EREVFVGKEK) match the Bipartite vacuolar targeting signal 1 motif. Residues 36–56 (IFIVLTVSICFMFALMLFYFT) form a helical; Signal-anchor for type II membrane protein membrane-spanning segment. At 57–492 (RNENNKTLFT…GTEAYVPLLE (436 aa)) the chain is on the lumenal side. Residue asparagine 61 is glycosylated (N-linked (GlcNAc...) asparagine). The Bipartite vacuolar targeting signal 2 signature appears at 84–105 (KSESGKKFIVSKLEELISSYDK). N-linked (GlcNAc...) asparagine glycosylation occurs at asparagine 129. A Nose motif; required for the correct folding of the mature form motif is present at residues 251–268 (EANYEDVIKKYKPADAKL). 4 disulfide bridges follow: cysteine 290–cysteine 331, cysteine 324–cysteine 365, cysteine 350–cysteine 370, and cysteine 419–cysteine 480. Cysteine 293 is an active-site residue. Residue histidine 425 is part of the active site. An Arm motif; binds to host hemoglobin and required for the inhibitory interaction between the propeptide and the catalytic domain motif is present at residues 436-445 (DIYNEDTGRM). Asparagine 455 is a catalytic residue.

It belongs to the peptidase C1 family. Auto-cleavage occurs at acidic pH. The proenzyme is the predominant form in late trophozoites and both the pro and mature enzyme are present in schizonts.

The protein resides in the membrane. Its subcellular location is the vacuole. The protein localises to the cytoplasmic vesicle membrane. With respect to regulation, inhibited by cysteine protease inhibitor ICP. Cysteine protease which cleaves native host hemoglobin and globin in the food vacuole during the asexual blood stage. Preferentially cleaves substrates which have an arginine at the P1 position and a leucine at the P2 position. In Plasmodium falciparum (isolate 3D7), this protein is Falcipain-3.